A 747-amino-acid chain; its full sequence is MSVQEDDDAAGPEVDRLRRHDSFYGDAEKVSNDKSHGTGENWARTLQLAFQSIGVVYGDVGTSPLYVYSSTFPDGVKHPDDLVGVLSLMLYTLILIPMVKYVFIVLYANDNGDGGTFALYSLISRHAKIRMIPNDQTEDANVSNYSIEAPSSQLRRAEWVKQKLESSNAAKIALFTITILGTSMVMGDGTLTPAISVLSAVSGIREKAPSLTQLQVVWISVPILIVLFSVQRFGTDKVGYSFAPVISVWFVLIAGIGAYNLAVHEITILRAFNPMYIIDYFRRNGKEAWVSLGGAVLCITGTEAMFADLGHFNIRAIQLSFTCVLFPSVALCYMGQAAYLRKFPEDVGDTFYKSLPAPLFWPVFVVAIMAAIIASQAMLSGAFAILSKALPLGCFPRVEVVHTSNKYEGQVYIPEVNFLIGVASVAITVAFQTTANIGNAYGICVVMVFSITTHLMTVVMLLIWKVRLPFIAAFYVVFTFTEFLYLSSILSKFAEGGYLPFCFSLVLMALMATWHYVHVKRYWYELDHIVPPDEMAALLARRDVRRVPGVGLLYTELVQGIPPVFPRLVDKIPSVHAVFVFMSIKHLPIPRVAPAERFIFQRVGPDAGHRIFRCVARYGYTDPLEGAKEFAAFLLDRLKVFVYEEAVFACQCAEDGGGGGGGDDDGVLRRAEEMAAEEKRLIDAEAERGLVYLMGEANVEAAPGSSLMKQIVVNYVYTRLRKNLREEHKALSIPKDQLLKVGITYEI.

Residues 1-47 (MSVQEDDDAAGPEVDRLRRHDSFYGDAEKVSNDKSHGTGENWARTLQ) are Cytoplasmic-facing. Residues 48–68 (LAFQSIGVVYGDVGTSPLYVY) traverse the membrane as a helical segment. Topologically, residues 69-84 (SSTFPDGVKHPDDLVG) are extracellular. Residues 85 to 105 (VLSLMLYTLILIPMVKYVFIV) form a helical membrane-spanning segment. Topologically, residues 106-171 (LYANDNGDGG…QKLESSNAAK (66 aa)) are cytoplasmic. A helical membrane pass occupies residues 172-192 (IALFTITILGTSMVMGDGTLT). At 193 to 209 (PAISVLSAVSGIREKAP) the chain is on the extracellular side. Residues 210 to 230 (SLTQLQVVWISVPILIVLFSV) traverse the membrane as a helical segment. Residues 231-237 (QRFGTDK) lie on the Cytoplasmic side of the membrane. A helical membrane pass occupies residues 238–258 (VGYSFAPVISVWFVLIAGIGA). The Extracellular portion of the chain corresponds to 259-288 (YNLAVHEITILRAFNPMYIIDYFRRNGKEA). Residues 289 to 309 (WVSLGGAVLCITGTEAMFADL) form a helical membrane-spanning segment. Residues 310-318 (GHFNIRAIQ) lie on the Cytoplasmic side of the membrane. A helical transmembrane segment spans residues 319–339 (LSFTCVLFPSVALCYMGQAAY). Residues 340–353 (LRKFPEDVGDTFYK) lie on the Extracellular side of the membrane. A helical membrane pass occupies residues 354-374 (SLPAPLFWPVFVVAIMAAIIA). Topologically, residues 375 to 410 (SQAMLSGAFAILSKALPLGCFPRVEVVHTSNKYEGQ) are cytoplasmic. A helical membrane pass occupies residues 411–431 (VYIPEVNFLIGVASVAITVAF). Topologically, residues 432 to 442 (QTTANIGNAYG) are extracellular. Residues 443-463 (ICVVMVFSITTHLMTVVMLLI) form a helical membrane-spanning segment. The Cytoplasmic portion of the chain corresponds to 464 to 469 (WKVRLP). The chain crosses the membrane as a helical span at residues 470-490 (FIAAFYVVFTFTEFLYLSSIL). Over 491 to 496 (SKFAEG) the chain is Extracellular. Residues 497–517 (GYLPFCFSLVLMALMATWHYV) form a helical membrane-spanning segment. Residues 518–747 (HVKRYWYELD…LLKVGITYEI (230 aa)) are Cytoplasmic-facing.

This sequence belongs to the HAK/KUP transporter (TC 2.A.72.3) family.

Its subcellular location is the membrane. High-affinity potassium transporter. This is Potassium transporter 20 (HAK20) from Oryza sativa subsp. japonica (Rice).